A 776-amino-acid polypeptide reads, in one-letter code: 5-methyltetrahydropteroyltriglutamate--homocysteine methyltransferase (776 aa).

Residues 16–19 (RELK) and Lys-112 each bind 5-methyltetrahydropteroyltri-L-glutamate. Residues 435–437 (IGS) and Glu-488 each bind L-homocysteine. L-methionine is bound by residues 435–437 (IGS) and Glu-488. Residues 519 to 520 (RC) and Trp-565 each bind 5-methyltetrahydropteroyltri-L-glutamate. An L-homocysteine-binding site is contributed by Asp-603. Asp-603 contacts L-methionine. Residue Glu-609 participates in 5-methyltetrahydropteroyltri-L-glutamate binding. Residues His-645, Cys-647, and Glu-669 each contribute to the Zn(2+) site. His-698 functions as the Proton donor in the catalytic mechanism. Residue Cys-730 participates in Zn(2+) binding.

Belongs to the vitamin-B12 independent methionine synthase family. Requires Zn(2+) as cofactor.

It catalyses the reaction 5-methyltetrahydropteroyltri-L-glutamate + L-homocysteine = tetrahydropteroyltri-L-glutamate + L-methionine. Its pathway is amino-acid biosynthesis; L-methionine biosynthesis via de novo pathway; L-methionine from L-homocysteine (MetE route): step 1/1. In terms of biological role, catalyzes the transfer of a methyl group from 5-methyltetrahydrofolate to homocysteine resulting in methionine formation. This Ralstonia pickettii (strain 12J) protein is 5-methyltetrahydropteroyltriglutamate--homocysteine methyltransferase.